A 155-amino-acid polypeptide reads, in one-letter code: 6,7-dimethyl-8-ribityllumazine synthase (155 aa).

5-amino-6-(D-ribitylamino)uracil is bound by residues phenylalanine 24, 58–60, and 82–84; these read AFE and AII. Position 87 to 88 (87 to 88) interacts with (2S)-2-hydroxy-3-oxobutyl phosphate; sequence ST. The active-site Proton donor is the histidine 90. Phenylalanine 115 lines the 5-amino-6-(D-ribitylamino)uracil pocket. Arginine 129 provides a ligand contact to (2S)-2-hydroxy-3-oxobutyl phosphate.

Belongs to the DMRL synthase family.

It carries out the reaction (2S)-2-hydroxy-3-oxobutyl phosphate + 5-amino-6-(D-ribitylamino)uracil = 6,7-dimethyl-8-(1-D-ribityl)lumazine + phosphate + 2 H2O + H(+). Its pathway is cofactor biosynthesis; riboflavin biosynthesis; riboflavin from 2-hydroxy-3-oxobutyl phosphate and 5-amino-6-(D-ribitylamino)uracil: step 1/2. In terms of biological role, catalyzes the formation of 6,7-dimethyl-8-ribityllumazine by condensation of 5-amino-6-(D-ribitylamino)uracil with 3,4-dihydroxy-2-butanone 4-phosphate. This is the penultimate step in the biosynthesis of riboflavin. This is 6,7-dimethyl-8-ribityllumazine synthase from Chlorobium luteolum (strain DSM 273 / BCRC 81028 / 2530) (Pelodictyon luteolum).